A 1169-amino-acid chain; its full sequence is ATP-dependent helicase/deoxyribonuclease subunit B (1169 aa).

The region spanning 1–296 (MTLRIVSGRS…QHVEANFANM (296 aa)) is the UvrD-like helicase ATP-binding domain. An ATP-binding site is contributed by 8 to 15 (GRSGTGKS). The region spanning 276 to 582 (YYTQRFQSED…EFSRIPPTLD (307 aa)) is the UvrD-like helicase C-terminal domain. Residues C804, C1129, C1132, and C1138 each coordinate [4Fe-4S] cluster.

Belongs to the helicase family. AddB/RexB type 1 subfamily. Heterodimer of AddA and AddB. Mg(2+) serves as cofactor. Requires [4Fe-4S] cluster as cofactor.

In terms of biological role, the heterodimer acts as both an ATP-dependent DNA helicase and an ATP-dependent, dual-direction single-stranded exonuclease. Recognizes the chi site generating a DNA molecule suitable for the initiation of homologous recombination. The AddB subunit has 5' -&gt; 3' nuclease activity but not helicase activity. The chain is ATP-dependent helicase/deoxyribonuclease subunit B from Lysinibacillus sphaericus (strain C3-41).